We begin with the raw amino-acid sequence, 132 residues long: Small ribosomal subunit protein uS8 (132 aa).

Belongs to the universal ribosomal protein uS8 family. As to quaternary structure, part of the 30S ribosomal subunit. Contacts proteins S5 and S12.

Functionally, one of the primary rRNA binding proteins, it binds directly to 16S rRNA central domain where it helps coordinate assembly of the platform of the 30S subunit. This is Small ribosomal subunit protein uS8 from Leptospira biflexa serovar Patoc (strain Patoc 1 / Ames).